A 251-amino-acid polypeptide reads, in one-letter code: Ubiquinone/menaquinone biosynthesis C-methyltransferase UbiE (251 aa).

S-adenosyl-L-methionine-binding positions include T74, D95, and 123-124 (NA).

It belongs to the class I-like SAM-binding methyltransferase superfamily. MenG/UbiE family.

The enzyme catalyses a 2-demethylmenaquinol + S-adenosyl-L-methionine = a menaquinol + S-adenosyl-L-homocysteine + H(+). It carries out the reaction a 2-methoxy-6-(all-trans-polyprenyl)benzene-1,4-diol + S-adenosyl-L-methionine = a 5-methoxy-2-methyl-3-(all-trans-polyprenyl)benzene-1,4-diol + S-adenosyl-L-homocysteine + H(+). The protein operates within quinol/quinone metabolism; menaquinone biosynthesis; menaquinol from 1,4-dihydroxy-2-naphthoate: step 2/2. It functions in the pathway cofactor biosynthesis; ubiquinone biosynthesis. Functionally, methyltransferase required for the conversion of demethylmenaquinol (DMKH2) to menaquinol (MKH2) and the conversion of 2-polyprenyl-6-methoxy-1,4-benzoquinol (DDMQH2) to 2-polyprenyl-3-methyl-6-methoxy-1,4-benzoquinol (DMQH2). The chain is Ubiquinone/menaquinone biosynthesis C-methyltransferase UbiE from Erwinia tasmaniensis (strain DSM 17950 / CFBP 7177 / CIP 109463 / NCPPB 4357 / Et1/99).